A 157-amino-acid polypeptide reads, in one-letter code: 3-hydroxyacyl-[acyl-carrier-protein] dehydratase FabZ (157 aa).

Histidine 58 is an active-site residue.

Belongs to the thioester dehydratase family. FabZ subfamily.

It localises to the cytoplasm. It carries out the reaction a (3R)-hydroxyacyl-[ACP] = a (2E)-enoyl-[ACP] + H2O. Involved in unsaturated fatty acids biosynthesis. Catalyzes the dehydration of short chain beta-hydroxyacyl-ACPs and long chain saturated and unsaturated beta-hydroxyacyl-ACPs. This Brucella abortus biovar 1 (strain 9-941) protein is 3-hydroxyacyl-[acyl-carrier-protein] dehydratase FabZ.